The chain runs to 719 residues: Polyribonucleotide nucleotidyltransferase (719 aa).

Residues D491 and D497 each contribute to the Mg(2+) site. Residues 558 to 617 (PRMLTIKINPEKIRDVIGKGGATIRALTEETGTQIDISDDGTIVIASVDETQAKEAQRRI) form the KH domain. The S1 motif domain occupies 627-695 (GQIYDGSVLR…DKGRLRLSIK (69 aa)).

Belongs to the polyribonucleotide nucleotidyltransferase family. It depends on Mg(2+) as a cofactor.

The protein localises to the cytoplasm. The enzyme catalyses RNA(n+1) + phosphate = RNA(n) + a ribonucleoside 5'-diphosphate. Functionally, involved in mRNA degradation. Catalyzes the phosphorolysis of single-stranded polyribonucleotides processively in the 3'- to 5'-direction. This is Polyribonucleotide nucleotidyltransferase from Bordetella parapertussis (strain 12822 / ATCC BAA-587 / NCTC 13253).